Consider the following 340-residue polypeptide: Flavonoid 7-O-methyltransferase 1 (340 aa).

Asp207 is a binding site for S-adenosyl-L-methionine. The active-site Proton acceptor is the His245.

The protein belongs to the class I-like SAM-binding methyltransferase superfamily. Cation-independent O-methyltransferase family. Homodimer. As to expression, expressed in leaves.

The catalysed reaction is (2S)-naringenin + S-adenosyl-L-methionine = (2S)-sakuranetin + S-adenosyl-L-homocysteine + H(+). The enzyme catalyses scutellarein + S-adenosyl-L-methionine = scutellarein 7-methyl ether + S-adenosyl-L-homocysteine. It catalyses the reaction apigenin + S-adenosyl-L-methionine = genkwanin + S-adenosyl-L-homocysteine + H(+). It carries out the reaction luteolin + S-adenosyl-L-methionine = luteolin 7-methyl ether + S-adenosyl-L-homocysteine + H(+). The catalysed reaction is chrysoeriol + S-adenosyl-L-methionine = velutin + S-adenosyl-L-homocysteine. The enzyme catalyses diosmetin + S-adenosyl-L-methionine = luteolin 4',7-dimethyl ether + S-adenosyl-L-homocysteine. It catalyses the reaction acacetin + S-adenosyl-L-methionine = apigenin 4',7-dimethyl ether + S-adenosyl-L-homocysteine. It carries out the reaction scutellarein 4'-methyl ether + S-adenosyl-L-methionine = ladanein + S-adenosyl-L-homocysteine. Its pathway is flavonoid metabolism. Functionally, flavonoid 7-O-methyltransferase involved in the biosynthesis of polymethoxylated flavonoids natural products such as nevadensin and salvigenin, aroma compounds which contribute to the flavor of sweet basil, and exhibit pharmacological activities such as anti-allergic, anti-oxidant, antibacterial, anti-proliferative, and anti-inflammatory effects. Catalyzes S-adenosylmethionine-dependent regioselective 7-O-methylation of flavonoids; active on various hydroxylated flavonoid substrates, including apigenin (API) and luteolin (LUT), and, with a lower efficiency, scutellarein (SCU), naringenin (NAR), chrysoeriol (CHRYS), diosmetin (DIOS), acacetin (ACA) and scutellarein-7-methyl ether (SCU7Me). This Ocimum basilicum (Sweet basil) protein is Flavonoid 7-O-methyltransferase 1.